The chain runs to 583 residues: Epsin-2 (583 aa).

The a 1,2-diacyl-sn-glycero-3-phospho-(1D-myo-inositol-4,5-bisphosphate) site is built by R8, K11, R25, N30, R63, and H73. The region spanning 12 to 144 (NIVNSYSEAE…KDEERLKVER (133 aa)) is the ENTH domain. The span at 165–181 (QITFGRGSSQPNLSISH) shows a compositional bias: polar residues. The interval 165-217 (QITFGRGSSQPNLSISHSEQEYGKAGGSPASYHGSTSPRVSSELEQARPQTSG) is disordered. Residue R170 is modified to Omega-N-methylarginine. 3 positions are modified to phosphoserine: S173, S192, and S195. The segment covering 197 to 216 (HGSTSPRVSSELEQARPQTS) has biased composition (polar residues). UIM domains lie at 218–237 (EEELQLQLALAMSREVAEQE) and 243–262 (GDDLRLQMALEESRRDTVKV). 2 disordered regions span residues 293-384 (SGPV…KPSP) and 411-457 (TSKK…PESF). 4 consecutive repeat copies span residues 301 to 303 (EPW), 313 to 315 (NPW), 326 to 328 (DPW), and 340 to 342 (DPW). Residues 301–315 (EPWSTGTPANQTNPW) show a composition bias toward polar residues. Residues 301–377 (EPWSTGTPAN…SDAGKTADAW (77 aa)) are 6 X 3 AA repeats of [DE]-P-W. The span at 346–355 (TTASIQSVPK) shows a compositional bias: polar residues. Tandem repeats lie at residues 358 to 360 (DPW) and 375 to 377 (DAW). The residue at position 431 (S431) is a Phosphoserine. Low complexity predominate over residues 437–448 (SQSLTSASSKPS). T453 bears the Phosphothreonine mark. 2 repeat units span residues 482 to 484 (NPF) and 496 to 498 (NPF). Positions 482–581 (NPFLAPGAAA…AQPAGTTNPF (100 aa)) are 3 X 3 AA repeats of N-P-F. S514 bears the Phosphoserine mark. The stretch at 579–581 (NPF) is repeat 3.

The protein belongs to the epsin family. Binds AP-2 and clathrin. Interacts with ITSN1. Interacts with UBQLN2. Binds EPS15. Ubiquitinated. In terms of tissue distribution, highly expressed in brain. Detected at lower levels in lung, liver, muscle and testis.

It localises to the cytoplasm. Functionally, plays a role in the formation of clathrin-coated invaginations and endocytosis. The sequence is that of Epsin-2 (Epn2) from Rattus norvegicus (Rat).